Here is a 106-residue protein sequence, read N- to C-terminus: Iron-sulfur cluster assembly protein CyaY (106 aa).

This sequence belongs to the frataxin family.

Functionally, involved in iron-sulfur (Fe-S) cluster assembly. May act as a regulator of Fe-S biogenesis. This Serratia proteamaculans (strain 568) protein is Iron-sulfur cluster assembly protein CyaY.